The primary structure comprises 318 residues: NADH-ubiquinone oxidoreductase chain 1 (318 aa).

The next 9 membrane-spanning stretches (helical) occupy residues 2 to 22 (FLTN…FLTL), 36 to 56 (GPNI…IKLF), 69 to 89 (LLFT…WIPL), 100 to 120 (LGML…LWSG), 130 to 152 (IGAL…ILLH), 171 to 191 (HIWL…STLA), 217 to 237 (AGPF…MNAL), 254 to 273 (LYST…FLWI), and 294 to 314 (LPLT…LTSI).

This sequence belongs to the complex I subunit 1 family.

The protein localises to the mitochondrion inner membrane. It carries out the reaction a ubiquinone + NADH + 5 H(+)(in) = a ubiquinol + NAD(+) + 4 H(+)(out). In terms of biological role, core subunit of the mitochondrial membrane respiratory chain NADH dehydrogenase (Complex I) that is believed to belong to the minimal assembly required for catalysis. Complex I functions in the transfer of electrons from NADH to the respiratory chain. The immediate electron acceptor for the enzyme is believed to be ubiquinone. The protein is NADH-ubiquinone oxidoreductase chain 1 (MT-ND1) of Cyclopes didactylus (Silky anteater).